Reading from the N-terminus, the 160-residue chain is NADH-quinone oxidoreductase subunit B (160 aa).

Residues cysteine 37, cysteine 38, cysteine 102, and cysteine 132 each coordinate [4Fe-4S] cluster.

This sequence belongs to the complex I 20 kDa subunit family. In terms of assembly, NDH-1 is composed of 14 different subunits. Subunits NuoB, C, D, E, F, and G constitute the peripheral sector of the complex. [4Fe-4S] cluster serves as cofactor.

It is found in the cell membrane. The enzyme catalyses a quinone + NADH + 5 H(+)(in) = a quinol + NAD(+) + 4 H(+)(out). In terms of biological role, NDH-1 shuttles electrons from NADH, via FMN and iron-sulfur (Fe-S) centers, to quinones in the respiratory chain. Couples the redox reaction to proton translocation (for every two electrons transferred, four hydrogen ions are translocated across the cytoplasmic membrane), and thus conserves the redox energy in a proton gradient. This Polynucleobacter asymbioticus (strain DSM 18221 / CIP 109841 / QLW-P1DMWA-1) (Polynucleobacter necessarius subsp. asymbioticus) protein is NADH-quinone oxidoreductase subunit B.